The sequence spans 88 residues: Cell division topological specificity factor (88 aa).

The protein belongs to the MinE family.

Functionally, prevents the cell division inhibition by proteins MinC and MinD at internal division sites while permitting inhibition at polar sites. This ensures cell division at the proper site by restricting the formation of a division septum at the midpoint of the long axis of the cell. The chain is Cell division topological specificity factor from Psychromonas ingrahamii (strain DSM 17664 / CCUG 51855 / 37).